The primary structure comprises 324 residues: NADH-cytochrome b5 reductase 2 (324 aa).

A helical membrane pass occupies residues 31–47; the sequence is IPLIGGITLAAGAGYYY. In terms of domain architecture, FAD-binding FR-type spans 70 to 178; it reads QGWIGLKLAH…KGPLPKYPWE (109 aa). Position 181–216 (181–216) interacts with FAD; sequence KHDHICLIAGGTGITPMYQLVRKIFSNPEDKTKVTL.

This sequence belongs to the flavoprotein pyridine nucleotide cytochrome reductase family. FAD is required as a cofactor.

It localises to the mitochondrion outer membrane. It carries out the reaction 2 Fe(III)-[cytochrome b5] + NADH = 2 Fe(II)-[cytochrome b5] + NAD(+) + H(+). May mediate the reduction of outer membrane cytochrome b5. This is NADH-cytochrome b5 reductase 2 (MCR1) from Ajellomyces capsulatus (strain NAm1 / WU24) (Darling's disease fungus).